Consider the following 839-residue polypeptide: Elongation factor 2 (839 aa).

In terms of domain architecture, tr-type G spans 17–248 (ENIRNMSVIA…MGRLWGDSYF (232 aa)). GTP-binding positions include 26–33 (AHVDHGKT), 156–159 (NKVD), and 211–213 (SGL). At histidine 698 the chain carries Diphthamide.

The protein belongs to the TRAFAC class translation factor GTPase superfamily. Classic translation factor GTPase family. EF-G/EF-2 subfamily. Phosphorylation by EF-2 kinase completely inactivates EF-2.

The protein resides in the cytoplasm. It carries out the reaction GTP + H2O = GDP + phosphate + H(+). Its function is as follows. Catalyzes the GTP-dependent ribosomal translocation step during translation elongation. During this step, the ribosome changes from the pre-translocational (PRE) to the post-translocational (POST) state as the newly formed A-site-bound peptidyl-tRNA and P-site-bound deacylated tRNA move to the P and E sites, respectively. Catalyzes the coordinated movement of the two tRNA molecules, the mRNA and conformational changes in the ribosome. The chain is Elongation factor 2 (efbA) from Dictyostelium discoideum (Social amoeba).